Reading from the N-terminus, the 307-residue chain is Protein FAM76A (307 aa).

Disordered stretches follow at residues 142-195 (QRKH…ESIT) and 287-307 (KQAAALSKSKKSEKSGAITSP). Polar residues predominate over residues 161-182 (SRLSGGSHYNSQKTLSTSSIQN). Positions 217-299 (IIAQLKEEVA…AALSKSKKSE (83 aa)) form a coiled coil.

The protein belongs to the FAM76 family.

The chain is Protein FAM76A (FAM76A) from Bos taurus (Bovine).